The sequence spans 631 residues: tRNA uridine 5-carboxymethylaminomethyl modification enzyme MnmG (631 aa).

FAD contacts are provided by residues 13–18, valine 125, and serine 180; that span reads GGGHAG. Position 273 to 287 (273 to 287) interacts with NAD(+); the sequence is GPRYCPSIEDKVMRF. Residue glutamine 370 coordinates FAD.

It belongs to the MnmG family. In terms of assembly, homodimer. Heterotetramer of two MnmE and two MnmG subunits. The cofactor is FAD.

The protein resides in the cytoplasm. Functionally, NAD-binding protein involved in the addition of a carboxymethylaminomethyl (cmnm) group at the wobble position (U34) of certain tRNAs, forming tRNA-cmnm(5)s(2)U34. In Vibrio campbellii (strain ATCC BAA-1116), this protein is tRNA uridine 5-carboxymethylaminomethyl modification enzyme MnmG.